Reading from the N-terminus, the 54-residue chain is UPF0391 membrane protein Bpet1858 (54 aa).

Transmembrane regions (helical) follow at residues Ala5–Ala25 and Ala27–Leu47.

It belongs to the UPF0391 family.

Its subcellular location is the cell membrane. The sequence is that of UPF0391 membrane protein Bpet1858 from Bordetella petrii (strain ATCC BAA-461 / DSM 12804 / CCUG 43448).